A 63-amino-acid polypeptide reads, in one-letter code: ATPase inhibitor, mitochondrial (63 aa).

The disordered stretch occupies residues 1–23 (TAGATGATRQDGSTDAFEKREKA). Residues 18–62 (EKREKAQEDLYIRQHEKEQLEALKESLKKQKKSLDDLEBKIDDLT) are a coiled coil.

Belongs to the ATPase inhibitor family.

Its subcellular location is the mitochondrion. This protein forms a one-to-one complex with ATPase to inhibit the enzyme activity completely. In Cyberlindnera jadinii (Torula yeast), this protein is ATPase inhibitor, mitochondrial.